Consider the following 156-residue polypeptide: Small ribosomal subunit protein uS7 (156 aa).

The protein belongs to the universal ribosomal protein uS7 family. Part of the 30S ribosomal subunit. Contacts proteins S9 and S11.

In terms of biological role, one of the primary rRNA binding proteins, it binds directly to 16S rRNA where it nucleates assembly of the head domain of the 30S subunit. Is located at the subunit interface close to the decoding center, probably blocks exit of the E-site tRNA. This Syntrophus aciditrophicus (strain SB) protein is Small ribosomal subunit protein uS7.